Consider the following 258-residue polypeptide: Neurotrophin-3 (258 aa).

The N-terminal stretch at 1–18 (MSILFYVIFLAYLRGIQG) is a signal peptide. Residues 19–139 (NSMDQRSLPE…ANRTSPRRKR (121 aa)) constitute a propeptide that is removed on maturation. Residues 60–85 (QSTLPKAEAPREPEQGEATRSEFQPM) are disordered. The segment covering 67-79 (EAPREPEQGEATR) has biased composition (basic and acidic residues). N131 carries N-linked (GlcNAc...) asparagine glycosylation. Intrachain disulfides connect C153-C218, C196-C247, and C206-C249.

Belongs to the NGF-beta family. Brain and peripheral tissues.

The protein resides in the secreted. In terms of biological role, seems to promote the survival of visceral and proprioceptive sensory neurons. The polypeptide is Neurotrophin-3 (Ntf3) (Mus musculus (Mouse)).